The primary structure comprises 986 residues: MGSTSNSTKNTGSTTTTTTTAAPATTAKHSNSAPTRPSVHYYSSTGDIEKLSNLLNNSATSPDTPDSEKRTPLHHAAFCGSAACVNFLLDKKANANIKDSAGNTPLQWASSRGHLECIKLLVEKGGVDVNTKDDKNGTPLHKASLFASAECVLYLLNGKADPRAVTTNGETPLHHASAGGNPQCVELLIKADSKVNAVDNDCITPLHQASFSGHSSCVSLLLKKGAKVDPRDIHGISPLHNAASAGYVDCVEQLVRNGENINCVDIEGVTPLHHTCFNGNLQLTKRLIELGAKINMVDEMGETPLHKAAFNGHKEVCEYLLYLDPTMIDCRDSRQSTSLHLAAFNGLLDMVDLLIRYKAQINIKDEEGATPLHKASFNGHSSCAKLLVDKGAPICIVDSQGATPLHKAAFNGRSKCLATLIRSGAELEVKDSQGGTPLHNAAYNGHSDCCRILLKKGANVNAVDTHSSTPLHLASAAGARDTVDVLIQFKARIDAKNFAGKTPLVYAIKKNHSDVARVLIRAGADLDQVSLRSSVDFTKTFGTENHDEIYQIVNKRESSNHEVDELQLALEQQAKEDMEQLAAEKQKLLLIKAAIAQFNSHPKKGIEFIVANGVISEKNPKEVAHFLLTHSELSKQSIGEYIGEGDDFNLQVLHAFVDELNFFGLDFDVALRKYLLTFRLPGEAQKIDRMMEKFASQFYQHNPENKVFVNQDAVYVLAFSVIMLNTDAHNPNIKKKMTKAEFLRNNSGINSGDDLPPDFMENLYDKIVTNEIKMERDGNQANQHVEKKGWLTKQGGRIKTWKKRWFILTANCLLYYKTPQDHEPCGIIPLENVVVTIDPQKKFCFMLHSSQEQMKACKLNSDGTLVQANHAAYFIAAANMAEMDSWVQSIKSNIHSNPNFEQLLKRKAETIRGRGKVSTKPIQNRKQTISGPPPSTTTTTTSTASNNVTSVGSPPNSGSVLNSSGSKPVTFSSTSSPVQQQTSALS.

The segment covering 1-28 (MGSTSNSTKNTGSTTTTTTTAAPATTAK) has biased composition (low complexity). The tract at residues 1–43 (MGSTSNSTKNTGSTTTTTTTAAPATTAKHSNSAPTRPSVHYYS) is disordered. Residues 29–43 (HSNSAPTRPSVHYYS) are compositionally biased toward polar residues. ANK repeat units follow at residues 34-63 (PTRPSVHYYSSTGDIEKLSNLLNNSATSPD), 68-97 (EKRTPLHHAAFCGSAACVNFLLDKKANANI), 101-131 (AGNTPLQWASSRGHLECIKLLVEKGGVDVNT), 135-164 (KNGTPLHKASLFASAECVLYLLNGKADPRA), 168-197 (NGETPLHHASAGGNPQCVELLIKADSKVNA), 201-230 (DCITPLHQASFSGHSSCVSLLLKKGAKVDP), 234-263 (HGISPLHNAASAGYVDCVEQLVRNGENINC), 267-296 (EGVTPLHHTCFNGNLQLTKRLIELGAKINM), 300-329 (MGETPLHKAAFNGHKEVCEYLLYLDPTMID), 334-363 (RQSTSLHLAAFNGLLDMVDLLIRYKAQINI), 367-396 (EGATPLHKASFNGHSSCAKLLVDKGAPICI), 400-429 (QGATPLHKAAFNGRSKCLATLIRSGAELEV), 433-462 (QGGTPLHNAAYNGHSDCCRILLKKGANVNA), 466-495 (HSSTPLHLASAAGARDTVDVLIQFKARIDA), and 499-528 (AGKTPLVYAIKKNHSDVARVLIRAGADLDQ). Positions 580-770 (QLAAEKQKLL…ENLYDKIVTN (191 aa)) constitute an SEC7 domain. The PH domain maps to 784-895 (HVEKKGWLTK…WVQSIKSNIH (112 aa)). The tract at residues 911 to 986 (IRGRGKVSTK…PVQQQTSALS (76 aa)) is disordered. Polar residues predominate over residues 920 to 929 (KPIQNRKQTI). Composition is skewed to low complexity over residues 936-953 (TTTTTTSTASNNVTSVGS) and 963-986 (SSGSKPVTFSSTSSPVQQQTSALS).

This chain is Ankyrin repeat, PH and SEC7 domain containing protein secG (secG), found in Dictyostelium discoideum (Social amoeba).